Here is a 511-residue protein sequence, read N- to C-terminus: MFS-type transporper mpsC (511 aa).

Positions 1–35 (MTSSTESKHSNDESTDLEKQDAEESHGLPEERKQD) are enriched in basic and acidic residues. A disordered region spans residues 1-65 (MTSSTESKHS…PDDPANPMNW (65 aa)). Transmembrane regions (helical) follow at residues 74–94 (VVMASLTTLFANITSTAFAPA), 108–128 (ITAALTVSIYLLGFAFGPLVI), 147–167 (ITVAFLIGCAQAKNLGMFLVF), 169–189 (LITGIAGSGPGTIGGGTIADV), 201–221 (AFAMGPLMGPVLGPLMSGFIA), 228–248 (WVFRVLCIATGVMTIVLYFVM), and 303–323 (PITLLLSLYCAFVFGLLILLF). Asn337 carries N-linked (GlcNAc...) asparagine glycosylation. 5 helical membrane-spanning segments follow: residues 342-362 (GLSYLGLGFGLAIGLVLFGML), 383-403 (LLLMVWFAPVIPGGFFWYGWT), 411-431 (ILPMMGTSLIGMGALMVMMPI), 443-465 (VAASALAANTLLRSLAGCFLPLA), and 476-496 (GWGNTLLGFIAIGFTCLPILF).

The protein belongs to the major facilitator superfamily.

It is found in the membrane. In terms of biological role, MFS-type transporper; part of the gene cluster that mediates the biosynthesis of macrophasetins, 3-decalinoyltetramic acids (DTAs) which feature a tetramate (pyrrolidine-2,4-dione) unit connected to a decalin fragment and that have potent bioactivities. Efflux pump that might be required for efficient secretion of macrophasetins. The polypeptide is MFS-type transporper mpsC (Macrophomina phaseolina (strain MS6) (Charcoal rot fungus)).